Consider the following 100-residue polypeptide: Large ribosomal subunit protein uL23 (100 aa).

This sequence belongs to the universal ribosomal protein uL23 family. As to quaternary structure, part of the 50S ribosomal subunit. Contacts protein L29, and trigger factor when it is bound to the ribosome.

One of the early assembly proteins it binds 23S rRNA. One of the proteins that surrounds the polypeptide exit tunnel on the outside of the ribosome. Forms the main docking site for trigger factor binding to the ribosome. In Pasteurella multocida (strain Pm70), this protein is Large ribosomal subunit protein uL23.